The following is a 211-amino-acid chain: MTDNNIFGNTKRFNDSIELINKLETPRFQKILTRVVNKIGHRNERIFTESEENILQNLFKITSLEFKGILECCSFIFEQTAYYSLSPNNLVNQLKKTMLNDDKTSCFQSVWEDNSEHVLNFLRTQSIAPLQLNEIGWRLHYQMSSSKTIKRNASAIMELNFNNNNNNNNNNNNNNNNNINNDKMILEFNKEQLLEFYNKLESIQEKLDTLA.

Positions 131–211 (QLNEIGWRLH…SIQEKLDTLA (81 aa)) constitute a COMM domain.

Belongs to the COMM domain-containing protein 10 family. In terms of assembly, component of the commander complex consisting of the CCC subcomplex and the retriever subcomplex. Component of the CCC subcomplex.

Functionally, scaffold protein in the commander complex that is essential for endosomal recycling of transmembrane cargos; the commander complex is composed of the CCC subcomplex and the retriever subcomplex. The sequence is that of COMM domain-containing protein 10 (commd10) from Dictyostelium discoideum (Social amoeba).